Here is a 512-residue protein sequence, read N- to C-terminus: Maturase K (512 aa).

Belongs to the intron maturase 2 family. MatK subfamily.

It localises to the plastid. Its subcellular location is the chloroplast. Its function is as follows. Usually encoded in the trnK tRNA gene intron. Probably assists in splicing its own and other chloroplast group II introns. The chain is Maturase K from Oenothera parviflora (Small-flowered evening primrose).